The following is a 254-amino-acid chain: MLRFIAVFALVNCALAGTLPNDLDGRIVNGVDTTIEAHPYQVPLQNAALSHFCGGSIISEDLVVTAAHCMQSYTASQIKVRLGSTIYNEGGELVSVKAFKFHEGYNPKTMVNDVALIKLATPVRESSKIRYIRLADRTPPTGTPAVVTGWGTKCFLTCVSLPKTLQEVEVDIVDQKACASNEFKYGSQIQDTMVCAYALKKDACQGDSGGPLVANNQLVGIVSWGSGCARVGYPGVFCDVPSVRSWIEKTAKEL.

Residues 1-16 (MLRFIAVFALVNCALA) form the signal peptide. Residues 17–26 (GTLPNDLDGR) constitute a propeptide, activation peptide. Positions 27-252 (IVNGVDTTIE…VRSWIEKTAK (226 aa)) constitute a Peptidase S1 domain. Cys-53 and Cys-69 are oxidised to a cystine. Active-site charge relay system residues include His-68 and Asp-113. Disulfide bonds link Cys-154-Cys-158, Cys-178-Cys-195, and Cys-204-Cys-228. Ser-208 (charge relay system) is an active-site residue.

This sequence belongs to the peptidase S1 family.

It is found in the secreted. The protein resides in the extracellular space. It carries out the reaction Preferential cleavage: Arg-|-Xaa, Lys-|-Xaa.. Involved in digestion of a protein meal. This chain is Trypsin, found in Sarcophaga bullata (Grey flesh fly).